Reading from the N-terminus, the 1331-residue chain is MQAAPRAGCGAALLLWIVSSCLCRAWTAPSTSQKCDEPLVSGLPHVAFSSSSSISGSYSPGYAKINKRGGAGGWSPSDSDHYQWLQVDFGNRKQISAIATQGRYSSSDWVTQYRMLYSDTGRNWKPYHQDGNIWAFPGNINSDGVVRHELQHPIIARYVRIVPLDWNGEGRIGLRIEVYGCSYWADVINFDGHVVLPYRFRNKKMKTLKDVIALNFKTSESEGVILHGEGQQGDYITLELKKAKLVLSLNLGSNQLGPIYGHTSVMTGSLLDDHHWHSVVIERQGRSINLTLDRSMQHFRTNGEFDYLDLDYEITFGGIPFSGKPSSSSRKNFKGCMESINYNGVNITDLARRKKLEPSNVGNLSFSCVEPYTVPVFFNATSYLEVPGRLNQDLFSVSFQFRTWNPNGLLVFSHFADNLGNVEIDLTESKVGVHINITQTKMSQIDISSGSGLNDGQWHEVRFLAKENFAILTIDGDEASAVRTNSPLQVKTGEKYFFGGFLNQMNNSSHSVLQPSFQGCMQLIQVDDQLVNLYEVAQRKPGSFANVSIDMCAIIDRCVPNHCEHGGKCSQTWDSFKCTCDETGYSGATCHNSIYEPSCEAYKHLGQTSNYYWIDPDGSGPLGPLKVYCNMTEDKVWTIVSHDLQMQTPVVGYNPEKYSVTQLVYSASMDQISAITDSAEYCEQYVSYFCKMSRLLNTPDGSPYTWWVGKANEKHYYWGGSGPGIQKCACGIERNCTDPKYYCNCDADYKQWRKDAGFLSYKDHLPVSQVVVGDTDRQGSEAKLSVGPLRCQGDRNYWNAASFPNPSSYLHFSTFQGETSADISFYFKTLTPWGVFLENMGKEDFIKLELKSATEVSFSFDVGNGPVEIVVRSPTPLNDDQWHRVTAERNVKQASLQVDRLPQQIRKAPTEGHTRLELYSQLFVGGAGGQQGFLGCIRSLRMNGVTLDLEERAKVTSGFISGCSGHCTSYGTNCENGGKCLERYHGYSCDCSNTAYDGTFCNKDVGAFFEEGMWLRYNFQAPATNARDSSSRVDNAPDQQNSHPDLAQEEIRFSFSTTKAPCILLYISSFTTDFLAVLVKPTGSLQIRYNLGGTREPYNIDVDHRNMANGQPHSVNITRHEKTIFLKLDHYPSVSYHLPSSSDTLFNSPKSLFLGKVIETGKIDQEIHKYNTPGFTGCLSRVQFNQIAPLKAALRQTNASAHVHIQGELVESNCGASPLTLSPMSSATDPWHLDHLDSASADFPYNPGQGQAIRNGVNRNSAIIGGVIAVVIFTILCTLVFLIRYMFRHKGTYHTNEAKGAESAESADAAIMNNDPNFTETIDESKKEWLI.

Residues 1–27 (MQAAPRAGCGAALLLWIVSSCLCRAWT) form the signal peptide. Residues 28–1262 (APSTSQKCDE…IRNGVNRNSA (1235 aa)) lie on the Extracellular side of the membrane. The F5/8 type C domain maps to 35–181 (CDEPLVSGLP…IGLRIEVYGC (147 aa)). A disulfide bridge links Cys-35 with Cys-181. A Laminin G-like 1 domain is found at 216 to 368 (FKTSESEGVI…SNVGNLSFSC (153 aa)). Asn-289, Asn-346, Asn-363, Asn-379, Asn-436, Asn-506, Asn-507, and Asn-546 each carry an N-linked (GlcNAc...) asparagine glycan. A disulfide bridge links Cys-336 with Cys-368. The Laminin G-like 2 domain maps to 401-552 (FRTWNPNGLL…SFANVSIDMC (152 aa)). 4 disulfide bridges follow: Cys-520/Cys-552, Cys-558/Cys-569, Cys-563/Cys-578, and Cys-580/Cys-590. An EGF-like 1 domain is found at 554–591 (IIDRCVPNHCEHGGKCSQTWDSFKCTCDETGYSGATCH). The Fibrinogen C-terminal domain occupies 592–798 (NSIYEPSCEA…LRCQGDRNYW (207 aa)). N-linked (GlcNAc...) asparagine glycosylation is found at Asn-630 and Asn-735. The 165-residue stretch at 799-963 (NAASFPNPSS…KVTSGFISGC (165 aa)) folds into the Laminin G-like 3 domain. 4 disulfides stabilise this stretch: Cys-936–Cys-963, Cys-967–Cys-980, Cys-974–Cys-989, and Cys-991–Cys-1001. The EGF-like 2 domain maps to 963–1002 (CSGHCTSYGTNCENGGKCLERYHGYSCDCSNTAYDGTFCN). Positions 1026–1045 (ARDSSSRVDNAPDQQNSHPD) are disordered. The region spanning 1055–1214 (FSTTKAPCIL…IQGELVESNC (160 aa)) is the Laminin G-like 4 domain. N-linked (GlcNAc...) asparagine glycosylation is found at Asn-1116 and Asn-1198. Residues Cys-1178 and Cys-1214 are joined by a disulfide bond. Residues 1263–1283 (IIGGVIAVVIFTILCTLVFLI) traverse the membrane as a helical segment. Over 1284–1331 (RYMFRHKGTYHTNEAKGAESAESADAAIMNNDPNFTETIDESKKEWLI) the chain is Cytoplasmic. Phosphoserine is present on residues Ser-1303 and Ser-1306.

Belongs to the neurexin family. As to quaternary structure, interacts (via C-terminus) with KCNA2. Interacts with GPR37. As to expression, predominantly expressed in nervous system.

It localises to the membrane. Its subcellular location is the cell projection. The protein localises to the axon. The protein resides in the cell junction. It is found in the paranodal septate junction. Required for gap junction formation. Required, with CNTNAP1, for radial and longitudinal organization of myelinated axons. Plays a role in the formation of functional distinct domains critical for saltatory conduction of nerve impulses in myelinated nerve fibers. Demarcates the juxtaparanodal region of the axo-glial junction. This Homo sapiens (Human) protein is Contactin-associated protein-like 2 (CNTNAP2).